We begin with the raw amino-acid sequence, 167 residues long: uncharacterized protein (167 aa).

It is found in the mitochondrion. This is an uncharacterized protein from Marchantia polymorpha (Common liverwort).